Here is a 368-residue protein sequence, read N- to C-terminus: MAGERRDSKAAAFFCLAWALCLALPGFPQHVGGREDRADWTQEKYSHRPTILNATSILQVTSQTNVNRMWQNDLHPILIERYPGSPGSYAVRQHIKHRLQGLQAGWLVEEDTFQSHTPYGYRTFSNIISTLNPLAKRHLVVACHYDSKYFLPQLDGKVFVGATDSAVPCAMMLELARSLDRQLSFLKQSSLPPKADLSLKLIFFDGEEAFVRWSPSDSLYGSRSLAQKMASTPHPPGARNTNQIQGIDLFVLLDLIGARNPVFPVYFLNTARWFGRLEAIEQSLHDLGLLNNYSSERQYFRSNLRRYPVEDDHIPFLRRGVPILHLIPSPFPRVWHTMEDNEENLDKPTIDNISKILQVFVLEYLNLG.

The signal sequence occupies residues 1-23; the sequence is MAGERRDSKAAAFFCLAWALCLA. N-linked (GlcNAc...) asparagine glycosylation occurs at N53. C143 and C169 are disulfide-bonded. D164 contributes to the Zn(2+) binding site. E207 functions as the Proton acceptor in the catalytic mechanism. Residue E208 participates in Zn(2+) binding. D254 acts as the Proton acceptor in catalysis. N-linked (GlcNAc...) asparagine glycosylation is present at N292. H336 serves as a coordination point for Zn(2+). N352 is a glycosylation site (N-linked (GlcNAc...) asparagine).

It belongs to the glutaminyl-peptide cyclotransferase family. As to expression, expressed by the venom gland.

The protein resides in the secreted. It carries out the reaction N-terminal L-glutaminyl-[peptide] = N-terminal 5-oxo-L-prolyl-[peptide] + NH4(+). Functionally, responsible for the biosynthesis of pyroglutamyl peptides. Has a bias against acidic and tryptophan residues adjacent to the N-terminal glutaminyl residue and a lack of importance of chain length after the second residue. Also catalyzes N-terminal pyroglutamate formation. The polypeptide is Glutaminyl-peptide cyclotransferase (QPCT) (Boiga irregularis (Brown tree snake)).